The sequence spans 253 residues: Imidazole glycerol phosphate synthase subunit HisF (253 aa).

Residues aspartate 11 and aspartate 130 contribute to the active site.

The protein belongs to the HisA/HisF family. As to quaternary structure, heterodimer of HisH and HisF.

It localises to the cytoplasm. It carries out the reaction 5-[(5-phospho-1-deoxy-D-ribulos-1-ylimino)methylamino]-1-(5-phospho-beta-D-ribosyl)imidazole-4-carboxamide + L-glutamine = D-erythro-1-(imidazol-4-yl)glycerol 3-phosphate + 5-amino-1-(5-phospho-beta-D-ribosyl)imidazole-4-carboxamide + L-glutamate + H(+). It functions in the pathway amino-acid biosynthesis; L-histidine biosynthesis; L-histidine from 5-phospho-alpha-D-ribose 1-diphosphate: step 5/9. IGPS catalyzes the conversion of PRFAR and glutamine to IGP, AICAR and glutamate. The HisF subunit catalyzes the cyclization activity that produces IGP and AICAR from PRFAR using the ammonia provided by the HisH subunit. This Cereibacter sphaeroides (strain ATCC 17025 / ATH 2.4.3) (Rhodobacter sphaeroides) protein is Imidazole glycerol phosphate synthase subunit HisF.